The sequence spans 272 residues: AA9 family lytic polysaccharide monooxygenase G (272 aa).

An N-terminal signal peptide occupies residues 1–22 (MKGAGSASFLLTLLSTITRTSA). Residue H23 participates in Cu(2+) binding. Residue N60 is glycosylated (N-linked (GlcNAc...) asparagine). Cystine bridges form between C78–C202 and C121–C125. H110 contributes to the Cu(2+) binding site. O2-binding residues include H188 and Q197. Y199 contributes to the Cu(2+) binding site.

The protein belongs to the polysaccharide monooxygenase AA9 family. Cu(2+) is required as a cofactor.

The protein localises to the secreted. The catalysed reaction is [(1-&gt;4)-beta-D-glucosyl]n+m + reduced acceptor + O2 = 4-dehydro-beta-D-glucosyl-[(1-&gt;4)-beta-D-glucosyl]n-1 + [(1-&gt;4)-beta-D-glucosyl]m + acceptor + H2O.. Its function is as follows. Lytic polysaccharide monooxygenase (LPMO) that depolymerizes crystalline and amorphous polysaccharides via the oxidation of scissile alpha- or beta-(1-4)-glycosidic bonds, yielding C1 or C4 oxidation products. Catalysis by LPMOs requires the reduction of the active-site copper from Cu(II) to Cu(I) by a reducing agent and H(2)O(2) or O(2) as a cosubstrate. Acts preferentially on crystalline regions of cellulose such as highly crystalline algae cellulose. The sequence is that of AA9 family lytic polysaccharide monooxygenase G from Emericella nidulans (strain FGSC A4 / ATCC 38163 / CBS 112.46 / NRRL 194 / M139) (Aspergillus nidulans).